Here is a 264-residue protein sequence, read N- to C-terminus: Thiazole synthase (264 aa).

Catalysis depends on lysine 98, which acts as the Schiff-base intermediate with DXP. 1-deoxy-D-xylulose 5-phosphate-binding positions include glycine 159, 185–186 (AG), and 207–208 (AT).

It belongs to the ThiG family. In terms of assembly, homotetramer. Forms heterodimers with either ThiH or ThiS.

It localises to the cytoplasm. It catalyses the reaction [ThiS sulfur-carrier protein]-C-terminal-Gly-aminoethanethioate + 2-iminoacetate + 1-deoxy-D-xylulose 5-phosphate = [ThiS sulfur-carrier protein]-C-terminal Gly-Gly + 2-[(2R,5Z)-2-carboxy-4-methylthiazol-5(2H)-ylidene]ethyl phosphate + 2 H2O + H(+). It functions in the pathway cofactor biosynthesis; thiamine diphosphate biosynthesis. Functionally, catalyzes the rearrangement of 1-deoxy-D-xylulose 5-phosphate (DXP) to produce the thiazole phosphate moiety of thiamine. Sulfur is provided by the thiocarboxylate moiety of the carrier protein ThiS. In vitro, sulfur can be provided by H(2)S. This is Thiazole synthase from Mycobacterium ulcerans (strain Agy99).